The sequence spans 425 residues: UDP-N-acetylglucosamine 1-carboxyvinyltransferase (425 aa).

Phosphoenolpyruvate is bound at residue 24 to 25 (KN). Arginine 95 provides a ligand contact to UDP-N-acetyl-alpha-D-glucosamine. Catalysis depends on cysteine 119, which acts as the Proton donor. Cysteine 119 is subject to 2-(S-cysteinyl)pyruvic acid O-phosphothioketal. Residues 124-128 (RPVDQ), aspartate 308, and valine 330 contribute to the UDP-N-acetyl-alpha-D-glucosamine site.

The protein belongs to the EPSP synthase family. MurA subfamily.

The protein resides in the cytoplasm. The catalysed reaction is phosphoenolpyruvate + UDP-N-acetyl-alpha-D-glucosamine = UDP-N-acetyl-3-O-(1-carboxyvinyl)-alpha-D-glucosamine + phosphate. The protein operates within cell wall biogenesis; peptidoglycan biosynthesis. Cell wall formation. Adds enolpyruvyl to UDP-N-acetylglucosamine. The protein is UDP-N-acetylglucosamine 1-carboxyvinyltransferase of Deinococcus deserti (strain DSM 17065 / CIP 109153 / LMG 22923 / VCD115).